A 380-amino-acid chain; its full sequence is MAKKDYYEVLGLQKGASENDIKRAYKRLASKHHPDKNQGSKDAEEKFKEINEAYEVLGDAEKRAAYDQYGHAAFEQGGGAGGFGGGFGGGGFGGFEDIFSEMFGGGFGGGGRRNHVVRGDDLRYDIEISLEEAVKGCKKDIRISTLAECDTCHGSGAEKGSKVETCSHCHGSGRIRRQQGFFVTEAVCPSCHGSGKKIEKPCKSCHGDGRVQKAKNLSVTIPAGVDTGNQLRLSGEGAAGENGAPAGDLYVVIHVREHDIFERDGSNLYCEVPISFTMAALGGEIEVPTLDGKLKLKIPAETQTGKLFRVRGKGVASPRGGYAGDLICKVVVETPVALNDEQKDLLRKLEESLAGKSKHRPQQESFLDSVKNFFSNLGKH.

The 66-residue stretch at 5–70 folds into the J domain; it reads DYYEVLGLQK…EKRAAYDQYG (66 aa). Residues 136–214 form a CR-type zinc finger; that stretch reads GCKKDIRIST…CHGDGRVQKA (79 aa). Positions 149, 152, 166, 169, 188, 191, 202, and 205 each coordinate Zn(2+). CXXCXGXG motif repeat units follow at residues 149 to 156, 166 to 173, 188 to 195, and 202 to 209; these read CDTCHGSG, CSHCHGSG, CPSCHGSG, and CKSCHGDG.

This sequence belongs to the DnaJ family. Homodimer. Zn(2+) serves as cofactor.

The protein localises to the cytoplasm. Participates actively in the response to hyperosmotic and heat shock by preventing the aggregation of stress-denatured proteins and by disaggregating proteins, also in an autonomous, DnaK-independent fashion. Unfolded proteins bind initially to DnaJ; upon interaction with the DnaJ-bound protein, DnaK hydrolyzes its bound ATP, resulting in the formation of a stable complex. GrpE releases ADP from DnaK; ATP binding to DnaK triggers the release of the substrate protein, thus completing the reaction cycle. Several rounds of ATP-dependent interactions between DnaJ, DnaK and GrpE are required for fully efficient folding. Also involved, together with DnaK and GrpE, in the DNA replication of plasmids through activation of initiation proteins. The sequence is that of Chaperone protein DnaJ from Actinobacillus pleuropneumoniae serotype 5b (strain L20).